Reading from the N-terminus, the 69-residue chain is Sec-independent protein translocase protein TatA (69 aa).

Residues 1-21 traverse the membrane as a helical segment; the sequence is MFGLGGQELILILMIILLLFG. The segment at 49–69 is disordered; that stretch reads EFNKAMDDETPKKKDFGPDRE.

Belongs to the TatA/E family. In terms of assembly, forms a complex with TatC.

The protein localises to the cell inner membrane. Functionally, part of the twin-arginine translocation (Tat) system that transports large folded proteins containing a characteristic twin-arginine motif in their signal peptide across membranes. TatA could form the protein-conducting channel of the Tat system. The chain is Sec-independent protein translocase protein TatA from Chlorobium luteolum (strain DSM 273 / BCRC 81028 / 2530) (Pelodictyon luteolum).